A 332-amino-acid chain; its full sequence is MSVKELLIQNVHKEEHSHAHNKITVVGVGAVGMACAISILMKDLADELALVDVIEDKLRGEMLDLQHGSLFLRTPKIVSGKDYSVTAHSKLVIITAGARQQEGESRLNLVQRNVNIFKFIIPNVVKHSPDCTLLVVSNPVDILTYVAWKISGFPKHRVIGSGCNLDSARFRYLMGGKLGIHSLSCHGWIIGEHGDSSVPVWSGVNVAGVSLKALYPDLGTDADKEHWKEVHKQVVDSAYEVIKLKGYTSWAIGLSVADLAETIMRNLRRVHPISTMVKGMYGIHDDVFLSVPCVLGYSGITDVVKMTLKSEEEEKLRKSADTLWGIQKELQF.

NAD(+) is bound by residues 29–57 (GAVG…IEDK) and R99. The substrate site is built by R106, N138, and R169. NAD(+) is bound at residue N138. H193 serves as the catalytic Proton acceptor. T248 lines the substrate pocket.

It belongs to the LDH/MDH superfamily. LDH family. As to quaternary structure, homotetramer.

It localises to the cytoplasm. It catalyses the reaction (S)-lactate + NAD(+) = pyruvate + NADH + H(+). It functions in the pathway fermentation; pyruvate fermentation to lactate; (S)-lactate from pyruvate: step 1/1. Interconverts simultaneously and stereospecifically pyruvate and lactate with concomitant interconversion of NADH and NAD(+). The polypeptide is L-lactate dehydrogenase A chain (LDHA) (Trachemys scripta elegans (Red-eared slider turtle)).